Here is a 1153-residue protein sequence, read N- to C-terminus: Nitric oxide synthase, inducible (1153 aa).

Residues 23 to 27 (DINNN) carry the DINNN-motif; mediates interaction with SPSB1, SPSB2 and SPSB4 motif. Residues cysteine 110 and cysteine 115 each contribute to the Zn(2+) site. Residue serine 118 coordinates (6R)-L-erythro-5,6,7,8-tetrahydrobiopterin. Cysteine 200 is a binding site for heme b. Serine 234 is modified (phosphoserine; by PKA). Glutamine 263, tryptophan 372, tyrosine 373, and glutamate 377 together coordinate L-arginine. (6R)-L-erythro-5,6,7,8-tetrahydrobiopterin is bound by residues arginine 381, isoleucine 462, tryptophan 463, and phenylalanine 476. Position 491 (tyrosine 491) interacts with heme b. The tract at residues 515 to 535 (LKVLVKAVLFACMLMRKTMAS) is calmodulin-binding. Residues 539–677 (VTILFATETG…AFRSWAVQTF (139 aa)) enclose the Flavodoxin-like domain. Residues threonine 545, glutamate 546, threonine 547, lysine 549, and serine 550 each contribute to the FMN site. Phosphotyrosine is present on tyrosine 575. Phosphoserine; by PKA is present on serine 578. Serine 591, threonine 592, serine 628, arginine 633, cysteine 635, glutamate 661, and glutamine 665 together coordinate FMN. An FAD-binding FR-type domain is found at 730 to 970 (KNVFTMRLKS…VRNASGFHLP (241 aa)). Arginine 750 provides a ligand contact to NADP(+). Histidine 772 serves as a coordination point for FAD. Serine 892 carries the phosphoserine; by PKA modification. Residues arginine 906, tyrosine 908, serine 909, threonine 924, and alanine 926 each coordinate FAD. Position 929 (threonine 929) interacts with NADP(+). FAD is bound by residues tyrosine 930, valine 943, cysteine 944, and serine 945. 8 residues coordinate NADP(+): threonine 984, arginine 1017, serine 1046, arginine 1047, lysine 1053, tyrosine 1055, glutamine 1057, and aspartate 1090.

The protein belongs to the NOS family. In terms of assembly, homodimer. Interacts with NHERF1. Interacts with GAPDH; induced by oxidatively-modified low-densitity lipoprotein (LDL(ox)). Interacts with S100A8 and S100A9 to form the iNOS-S100A8/9 transnitrosylase complex. Interacts with SPSB1, SPSB2 and SPSB4. Interacts with ELOC and CUL5 in the presence of SPSB1 or SPSB2 or SPSB4. Forms a complex with ASL, ASS1 and HSP90AA1; the complex regulates cell-autonomous L-arginine synthesis and citrulline recycling while channeling extracellular L-arginine to nitric oxide synthesis pathway. Heme b serves as cofactor. It depends on FAD as a cofactor. Requires FMN as cofactor. The cofactor is (6R)-L-erythro-5,6,7,8-tetrahydrobiopterin. In terms of processing, polyubiquitinated; mediated by SPSB1, SPSB2 and SPSB4, leading to proteasomal degradation. In terms of tissue distribution, expressed in the liver, retina, bone cells and airway epithelial cells of the lung. Not expressed in the platelets. Expressed in chondrocytes.

Its subcellular location is the cytoplasm. The protein resides in the cytosol. It catalyses the reaction 2 L-arginine + 3 NADPH + 4 O2 + H(+) = 2 L-citrulline + 2 nitric oxide + 3 NADP(+) + 4 H2O. Regulated by calcium/calmodulin. Aspirin inhibits expression and function of this enzyme and effects may be exerted at the level of translational/post-translational modification and directly on the catalytic activity. Functionally, produces nitric oxide (NO) which is a messenger molecule with diverse functions throughout the body. In macrophages, NO mediates tumoricidal and bactericidal actions. Also has nitrosylase activity and mediates cysteine S-nitrosylation of cytoplasmic target proteins such PTGS2/COX2. As component of the iNOS-S100A8/9 transnitrosylase complex involved in the selective inflammatory stimulus-dependent S-nitrosylation of GAPDH on 'Cys-247' implicated in regulation of the GAIT complex activity and probably multiple targets including ANXA5, EZR, MSN and VIM. Involved in inflammation, enhances the synthesis of pro-inflammatory mediators such as IL6 and IL8. The sequence is that of Nitric oxide synthase, inducible from Homo sapiens (Human).